Consider the following 356-residue polypeptide: AT-hook motif nuclear-localized protein 1 (356 aa).

Residues 1-127 (MVLNMESTGE…PSHLPPPSSH (127 aa)) form a disordered region. Residues 49 to 66 (VTPPPPQPSSHHTAPPPL) show a composition bias toward pro residues. A compositionally biased stretch (basic residues) spans 88 to 97 (MKKKRGRPRK). The Bipartite nuclear localization signal signature appears at 89 to 97 (KKKRGRPRK). Positions 89-101 (KKKRGRPRKYGPD) form a DNA-binding region, a.T hook. Residues 106 to 118 (ALSPKPISSAPAP) show a composition bias toward low complexity. The region spanning 167–309 (GGNFTPHIIT…KHDFMLSSPT (143 aa)) is the PPC domain. The required for nuclear localization stretch occupies residues 270–287 (GLLVAASPVQVVVGSFLA). The Nuclear localization signal signature appears at 295-302 (KPKKNKHD).

The protein resides in the nucleus. The protein localises to the nucleoplasm. Its subcellular location is the chromosome. Its function is as follows. Transcription factor that specifically binds AT-rich DNA sequences related to the nuclear matrix attachment regions (MARs). May play a function in the positioning of chromatin fibers within the nucleus. This is AT-hook motif nuclear-localized protein 1 from Arabidopsis thaliana (Mouse-ear cress).